We begin with the raw amino-acid sequence, 221 residues long: Esterase C25G4.2 (221 aa).

Active-site charge relay system residues include Ser106, Asp166, and His194.

It belongs to the LovG family.

This chain is Esterase C25G4.2, found in Caenorhabditis elegans.